Reading from the N-terminus, the 413-residue chain is Protein trichome birefringence-like 31 (413 aa).

A helical; Signal-anchor for type II membrane protein membrane pass occupies residues 12-34 (IQSIFQVVLVSLLVLGSVRWILD). The short motif at 141–143 (GDS) is the GDS motif element. Residues 384-398 (DCIHWCLPGVPDTWN) carry the DCXHWCLPGXXDXWN motif motif.

This sequence belongs to the PC-esterase family. TBL subfamily.

Its subcellular location is the membrane. In terms of biological role, may act as a bridging protein that binds pectin and other cell wall polysaccharides. Probably involved in maintaining esterification of pectins. May be involved in the specific O-acetylation of cell wall polymers. The sequence is that of Protein trichome birefringence-like 31 (TBL31) from Arabidopsis thaliana (Mouse-ear cress).